Reading from the N-terminus, the 247-residue chain is MLLLLPILNLSLQLHPVAALFTVTAPKEVYTVDVGSSVSLECDFDRRECTELEGIRASLQKVENDTSLQSERATLLEEQLPLGKALFHIPSVQVRDSGQYRCLVICGAAWDYKYLTVKVKASYMRIDTRILEVPGTGEVQLTCQARGYPLAEVSWQNVSVPANTSHIRTPEGLYQVTSVLRLKPQPSRNFSCMFWNAHMKELTSAIIDPLSRMEPKVPRTWPLHVFIPACTIALIFLAIVIIQRKRI.

An N-terminal signal peptide occupies residues 1 to 19; it reads MLLLLPILNLSLQLHPVAA. The Extracellular segment spans residues 20–221; sequence LFTVTAPKEV…RMEPKVPRTW (202 aa). The region spanning 21-118 is the Ig-like V-type domain; it reads FTVTAPKEVY…AWDYKYLTVK (98 aa). 2 disulfides stabilise this stretch: Cys-42/Cys-102 and Cys-143/Cys-192. Asn-64, Asn-157, Asn-163, and Asn-189 each carry an N-linked (GlcNAc...) asparagine glycan. The region spanning 122–203 is the Ig-like C2-type domain; the sequence is SYMRIDTRIL…FWNAHMKELT (82 aa). The helical transmembrane segment at 222 to 242 threads the bilayer; sequence PLHVFIPACTIALIFLAIVII. Residues 243–247 are Cytoplasmic-facing; the sequence is QRKRI.

The protein belongs to the immunoglobulin superfamily. BTN/MOG family. Interacts with PDCD1. As to expression, expressed in immature and mature bone marrow-derived dendritic cells and splenic dendritic cells. Highly expressed in placenta, liver and weakly expressed in heart, spleen, lymph nodes and thymus. Also expressed in some tumor cell lines of lymphoid origin.

It localises to the cell membrane. Involved in the costimulatory signal essential for T-cell proliferation and IFNG production in a PDCD1-independent manner. Interaction with PDCD1 inhibits T-cell proliferation by blocking cell cycle progression and cytokine production. This is Programmed cell death 1 ligand 2 (Pdcd1lg2) from Mus musculus (Mouse).